The sequence spans 334 residues: Protein-methionine-sulfoxide reductase catalytic subunit MsrP (334 aa).

Positions 1–44 form a signal peptide, tat-type signal; that stretch reads MKKNQFLKESDVTAESVFFMKRRQVLKALGISATALSLPHAAHA. Mo-molybdopterin is bound by residues Asn-88, 91–92, Cys-146, Thr-181, Asn-233, Arg-238, and 249–251; these read YE and GIK.

Belongs to the MsrP family. Heterodimer of a catalytic subunit (MsrP) and a heme-binding subunit (MsrQ). Mo-molybdopterin is required as a cofactor. In terms of processing, exported by the Tat system. Can also be exported by the Sec system.

It is found in the periplasm. The enzyme catalyses L-methionyl-[protein] + a quinone + H2O = L-methionyl-(S)-S-oxide-[protein] + a quinol. It catalyses the reaction L-methionyl-[protein] + a quinone + H2O = L-methionyl-(R)-S-oxide-[protein] + a quinol. Part of the MsrPQ system that repairs oxidized periplasmic proteins containing methionine sulfoxide residues (Met-O), using respiratory chain electrons. Thus protects these proteins from oxidative-stress damage caused by reactive species of oxygen and chlorine. MsrPQ is essential for the maintenance of envelope integrity under bleach stress, rescuing a wide series of structurally unrelated periplasmic proteins from methionine oxidation, including the primary periplasmic chaperone SurA and the lipoprotein Pal. The catalytic subunit MsrP is non-stereospecific, being able to reduce both (R-) and (S-) diastereoisomers of methionine sulfoxide. Can catalyze the reduction of a variety of substrates in vitro, including dimethyl sulfoxide, trimethylamine N-oxide, phenylmethyl sulfoxide and L-methionine sulfoxide. Cannot reduce cyclic N-oxides. Shows no activity as sulfite oxidase. The polypeptide is Protein-methionine-sulfoxide reductase catalytic subunit MsrP (Escherichia coli (strain K12)).